The chain runs to 148 residues: Helix-loop-helix protein 14 (148 aa).

Disordered stretches follow at residues 1–21 (MAKKNQVARNERERKRVHQVN), 63–83 (DPQQPSVSSSTPDYTMNNSNN), and 112–132 (GDVSHNFNSPTSSVSSSSYSP). A basic motif region spans residues 4–17 (KNQVARNERERKRV). The region spanning 4 to 56 (KNQVARNERERKRVHQVNHGFDVLRNRLQPKNHTKKWSKADTLREAVKYIQQL) is the bHLH domain. Positions 18–56 (HQVNHGFDVLRNRLQPKNHTKKWSKADTLREAVKYIQQL) are helix-loop-helix motif. Residues 63 to 78 (DPQQPSVSSSTPDYTM) show a composition bias toward polar residues. Over residues 120 to 132 (SPTSSVSSSSYSP) the composition is skewed to low complexity.

Its subcellular location is the nucleus. In terms of biological role, probable transcription factor, involved in determining neuroblast cell fate, morphogenesis and aspects of terminal differentiation in both left/right symmetric and asymmetric neuronal lineages. This is Helix-loop-helix protein 14 from Caenorhabditis elegans.